Reading from the N-terminus, the 190-residue chain is Probable GTP-binding protein EngB (190 aa).

The 169-residue stretch at 22–190 folds into the EngB-type G domain; that stretch reads VKREVAFAGR…LNELLKILIP (169 aa). Residues 30 to 37, 56 to 60, 74 to 77, 141 to 144, and 173 to 175 each bind GTP; these read GRSNVGKS, GKTRS, DLPG, TKTD, and FSA. Positions 37 and 58 each coordinate Mg(2+).

This sequence belongs to the TRAFAC class TrmE-Era-EngA-EngB-Septin-like GTPase superfamily. EngB GTPase family. It depends on Mg(2+) as a cofactor.

Its function is as follows. Necessary for normal cell division and for the maintenance of normal septation. The sequence is that of Probable GTP-binding protein EngB from Kosmotoga olearia (strain ATCC BAA-1733 / DSM 21960 / TBF 19.5.1).